Reading from the N-terminus, the 474-residue chain is Cobyric acid synthase (474 aa).

The 181-residue stretch at 251-431 (TGFVAIPRLP…LHGLLENSAY (181 aa)) folds into the GATase cobBQ-type domain. Cys328 (nucleophile) is an active-site residue. His423 is a catalytic residue.

This sequence belongs to the CobB/CobQ family. CobQ subfamily.

It participates in cofactor biosynthesis; adenosylcobalamin biosynthesis. Functionally, catalyzes amidations at positions B, D, E, and G on adenosylcobyrinic A,C-diamide. NH(2) groups are provided by glutamine, and one molecule of ATP is hydrogenolyzed for each amidation. This chain is Cobyric acid synthase, found in Deinococcus radiodurans (strain ATCC 13939 / DSM 20539 / JCM 16871 / CCUG 27074 / LMG 4051 / NBRC 15346 / NCIMB 9279 / VKM B-1422 / R1).